A 61-amino-acid chain; its full sequence is Small ribosomal subunit protein uS14 (61 aa).

4 residues coordinate Zn(2+): C24, C27, C40, and C43.

The protein belongs to the universal ribosomal protein uS14 family. Zinc-binding uS14 subfamily. In terms of assembly, part of the 30S ribosomal subunit. Contacts proteins S3 and S10. Zn(2+) serves as cofactor.

Its function is as follows. Binds 16S rRNA, required for the assembly of 30S particles and may also be responsible for determining the conformation of the 16S rRNA at the A site. The sequence is that of Small ribosomal subunit protein uS14 from Helicobacter pylori (strain G27).